An 88-amino-acid chain; its full sequence is Putative septation protein SpoVG (88 aa).

This sequence belongs to the SpoVG family.

Could be involved in septation. In Desulforudis audaxviator (strain MP104C), this protein is Putative septation protein SpoVG.